A 384-amino-acid chain; its full sequence is ATP phosphoribosyltransferase regulatory subunit (384 aa).

The protein belongs to the class-II aminoacyl-tRNA synthetase family. HisZ subfamily. As to quaternary structure, heteromultimer composed of HisG and HisZ subunits.

Its subcellular location is the cytoplasm. The protein operates within amino-acid biosynthesis; L-histidine biosynthesis; L-histidine from 5-phospho-alpha-D-ribose 1-diphosphate: step 1/9. In terms of biological role, required for the first step of histidine biosynthesis. May allow the feedback regulation of ATP phosphoribosyltransferase activity by histidine. In Azoarcus sp. (strain BH72), this protein is ATP phosphoribosyltransferase regulatory subunit.